Here is a 244-residue protein sequence, read N- to C-terminus: rRNA adenine N-6-methyltransferase (244 aa).

N11, I13, G38, E59, D84, and N101 together coordinate S-adenosyl-L-methionine.

The protein belongs to the class I-like SAM-binding methyltransferase superfamily. rRNA adenine N(6)-methyltransferase family.

It carries out the reaction adenosine(2085) in 23S rRNA + 2 S-adenosyl-L-methionine = N(6)-dimethyladenosine(2085) in 23S rRNA + 2 S-adenosyl-L-homocysteine + 2 H(+). Functionally, this protein produces a dimethylation of the adenine residue at position 2085 in 23S rRNA, resulting in reduced affinity between ribosomes and macrolide-lincosamide-streptogramin B antibiotics. Is involved in erythromycin resistance. This chain is rRNA adenine N-6-methyltransferase (ermGT), found in Limosilactobacillus reuteri (Lactobacillus reuteri).